Consider the following 402-residue polypeptide: S-adenosylmethionine synthase (402 aa).

140–145 contacts ATP; the sequence is GNGSID.

This sequence belongs to the AdoMet synthase 2 family. The cofactor is Mg(2+).

The enzyme catalyses L-methionine + ATP + H2O = S-adenosyl-L-methionine + phosphate + diphosphate. Its pathway is amino-acid biosynthesis; S-adenosyl-L-methionine biosynthesis; S-adenosyl-L-methionine from L-methionine: step 1/1. Catalyzes the formation of S-adenosylmethionine from methionine and ATP. The protein is S-adenosylmethionine synthase of Picrophilus torridus (strain ATCC 700027 / DSM 9790 / JCM 10055 / NBRC 100828 / KAW 2/3).